We begin with the raw amino-acid sequence, 62 residues long: Conotoxin Lt5.5 (62 aa).

An N-terminal signal peptide occupies residues Met1 to Ala22. Positions Gln23–Asn48 are excised as a propeptide.

The protein belongs to the conotoxin T superfamily. Post-translationally, contains 2 disulfide bonds that can be either 'C1-C3, C2-C4' or 'C1-C4, C2-C3', since these disulfide connectivities have been observed for conotoxins with cysteine framework V (for examples, see AC P0DQQ7 and AC P81755). As to expression, expressed by the venom duct.

It localises to the secreted. The polypeptide is Conotoxin Lt5.5 (Conus litteratus (Lettered cone)).